The primary structure comprises 258 residues: Hydroxyacylglutathione hydrolase (258 aa).

The Zn(2+) site is built by His-56, His-58, Asp-60, His-61, His-112, Asp-132, and His-170.

Belongs to the metallo-beta-lactamase superfamily. Glyoxalase II family. Monomer. Zn(2+) is required as a cofactor.

The catalysed reaction is an S-(2-hydroxyacyl)glutathione + H2O = a 2-hydroxy carboxylate + glutathione + H(+). It functions in the pathway secondary metabolite metabolism; methylglyoxal degradation; (R)-lactate from methylglyoxal: step 2/2. In terms of biological role, thiolesterase that catalyzes the hydrolysis of S-D-lactoyl-glutathione to form glutathione and D-lactic acid. The sequence is that of Hydroxyacylglutathione hydrolase from Pseudomonas aeruginosa (strain LESB58).